The following is a 298-amino-acid chain: GTP cyclohydrolase FolE2 (298 aa).

This sequence belongs to the GTP cyclohydrolase IV family.

It carries out the reaction GTP + H2O = 7,8-dihydroneopterin 3'-triphosphate + formate + H(+). It participates in cofactor biosynthesis; 7,8-dihydroneopterin triphosphate biosynthesis; 7,8-dihydroneopterin triphosphate from GTP: step 1/1. Functionally, converts GTP to 7,8-dihydroneopterin triphosphate. The protein is GTP cyclohydrolase FolE2 of Xylella fastidiosa (strain M23).